A 655-amino-acid chain; its full sequence is p-hydroxybenzoic acid efflux pump subunit AaeB (655 aa).

The next 11 helical transmembrane spans lie at 13–33, 38–58, 69–89, 93–113, 121–141, 152–172, 370–390, 407–427, 431–451, 459–479, and 482–502; these read FAVKLACAIVLALFVGFHFQL, WAVLTAAIVAAGPAFAAGGEP, LRIIGTFIGCIAALTIIITMI, LLMILVCCIWAGFCTWISSLV, WGLSGYTALIIVITIQAEPLL, EIVIGIVCAIMADLLFSPRSV, LFWLWTGWTSGSGAMVMIAVV, FIYGTLAALPLGLLYFLVIIP, QSMLLLCLSLAVLGFFLGIEV, MGALASTINIIVLDNPMTFHF, and FLDSALGQIVGCMMAFIVILL.

The protein belongs to the aromatic acid exporter ArAE (TC 2.A.85) family.

The protein localises to the cell inner membrane. Its function is as follows. Forms an efflux pump with AaeA. Could function as a metabolic relief valve, allowing to eliminate certain compounds when they accumulate to high levels in the cell. The polypeptide is p-hydroxybenzoic acid efflux pump subunit AaeB (Citrobacter koseri (strain ATCC BAA-895 / CDC 4225-83 / SGSC4696)).